Here is a 62-residue protein sequence, read N- to C-terminus: Sperm protamine P1 (62 aa).

The disordered stretch occupies residues 1–62; sequence MARYRHSRSR…RYSRRGRRRY (62 aa).

It belongs to the protamine P1 family. Testis.

It localises to the nucleus. The protein resides in the chromosome. Protamines substitute for histones in the chromatin of sperm during the haploid phase of spermatogenesis. They compact sperm DNA into a highly condensed, stable and inactive complex. The chain is Sperm protamine P1 (PRM1) from Trichosurus vulpecula (Brush-tailed possum).